A 440-amino-acid chain; its full sequence is tRNA modification GTPase MnmE (440 aa).

(6S)-5-formyl-5,6,7,8-tetrahydrofolate contacts are provided by R23, E80, and K120. Residues 217–366 enclose the TrmE-type G domain; the sequence is GLKIVIAGEP…LLAMLQAHLP (150 aa). A K(+)-binding site is contributed by N227. GTP is bound by residues 227–232, 246–252, and 271–274; these read NAGKSS, TEIAGTT, and DTAG. Mg(2+) is bound at residue S231. Residues T246, I248, and T251 each contribute to the K(+) site. Residue T252 coordinates Mg(2+). K440 serves as a coordination point for (6S)-5-formyl-5,6,7,8-tetrahydrofolate.

Belongs to the TRAFAC class TrmE-Era-EngA-EngB-Septin-like GTPase superfamily. TrmE GTPase family. In terms of assembly, homodimer. Heterotetramer of two MnmE and two MnmG subunits. It depends on K(+) as a cofactor.

The protein localises to the cytoplasm. Its function is as follows. Exhibits a very high intrinsic GTPase hydrolysis rate. Involved in the addition of a carboxymethylaminomethyl (cmnm) group at the wobble position (U34) of certain tRNAs, forming tRNA-cmnm(5)s(2)U34. This is tRNA modification GTPase MnmE from Sinorhizobium medicae (strain WSM419) (Ensifer medicae).